Reading from the N-terminus, the 189-residue chain is dCTP deaminase (189 aa).

DCTP contacts are provided by residues 112–117 (KSTYAR), 136–138 (TLE), glutamine 157, tyrosine 171, and glutamine 181. Glutamate 138 serves as the catalytic Proton donor/acceptor.

This sequence belongs to the dCTP deaminase family. Homotrimer.

It carries out the reaction dCTP + H2O + H(+) = dUTP + NH4(+). It functions in the pathway pyrimidine metabolism; dUMP biosynthesis; dUMP from dCTP (dUTP route): step 1/2. Its function is as follows. Catalyzes the deamination of dCTP to dUTP. This is dCTP deaminase from Leptothrix cholodnii (strain ATCC 51168 / LMG 8142 / SP-6) (Leptothrix discophora (strain SP-6)).